Consider the following 418-residue polypeptide: Chromo domain-containing protein rhino (418 aa).

In terms of domain architecture, Chromo spans 24–74; the sequence is YVVEKILGKRFVNGRPQVLVKWSGFPNENNTWEPLENVGNCMKLVSDFESE. 2 stretches are compositionally biased toward low complexity: residues 84–99 and 107–120; these read AKSVGKSKSSPSSSGP and SSSKKTQQHSKSVQ. Disordered stretches follow at residues 84–167 and 199–337; these read AKSV…TDST and PTKD…RCPR. Residues 131–143 show a composition bias toward basic residues; it reads NQKKGKNIKKTAG. The span at 152–167 shows a compositional bias: polar residues; sequence PKTQMPSTSQVSTDST. Basic and acidic residues predominate over residues 218–228; sequence RLIEFPQREDA. The segment covering 258–275 has biased composition (low complexity); it reads GESSSSMSLPTVSSTSSE. Residues 276–285 show a composition bias toward basic and acidic residues; it reads KSIKVTKSEP. The segment at 353 to 418 is required for interaction with del/deadlock; the sequence is TKPFGVNRGL…FESLRIIVPK (66 aa).

As to quaternary structure, homodimer in solution. Dimerization is essential for chromatin binding. Component of the Rhino-Deadlock-Cutoff (RDC) complex, composed of rhi/rhino, del/deadlock and cuff/cutoff. Interacts (via C-terminus) with del/deadlock (via N-terminus); this interaction is direct. Two copies of del/deadlock associate with each rhi/rhino dimer. Interacts with cuff/cutoff; this interaction is indirect and is mediated by del/deadlock. Interacts (via Chromo domain) with kipf/kipferl (via C2H2 type zinc finger 4). Interacts (via Chromo domain) with His3/histone H3 (via N-terminus di- or tri-methylated on 'Lys-10' (H3K9me2/3)); this interaction is direct. Two His3 N-terminal tails oriented anti-parallel to each other are required for dimer binding to His3. In terms of tissue distribution, female specific, expressed in both somatic and germline cells but highly enriched in ovaries. In the germarium of the developing oocyte expressed in germline stem cells, cystoblasts and developing germline cysts. Expressed in nurse cells in the germarium and egg chamber.

It is found in the nucleus. Its subcellular location is the chromosome. Involved in piRNA (piwi-interacting RNA)-mediated transposon repression. May be involved in formation of the perinuclear nuage, a subcellular structure implicated in RNA processing that may be involved in transposon RNA surveillance and silencing. Required for ping-pong amplification during piRNA biogenesis, probably by promoting transcription of piRNA precursors. As part of the Rhino-Deadlock-Cutoff (RDC) Complex associates with, and drives non-canonical transcription of germline specific dual-strand piRNA clusters 80F, 38C and 42AB, but not single-stranded piRNA cluster 20A. Induction of piRNA expression is potentially achieved through a mechanism that prevents transcriptional termination and leads to readthrough from flanking transcription units. Recruited to specific chromatin regions by a combination of H3K9me2/3 histone methylation and differentially expressed sequence-specific recruitment factors. This association may involve direct interaction with DNA. Associates with chromatin upon exposure to homologous piRNA and facilitates transcriptional read-through. As part of the RDC complex, involved in suppression of splicing. In ovaries, recruitment to specific heterochromatin clusters is nucleated and stabilized by kipf/kipferl. During oogenesis, involved in axis specification and may regulate chromosome condensation at the onset of a mitotic-like phase that occurs during nurse cell chromosome duplication. Involved in the distribution of mRNAs for proteins that play a role in anterior-posterior and dorsal-ventral axes specification during development of the oocyte, including grk/gurken, osk/oskar and vas/vasa. Mitigates meiotic double strand breaks and interacts with DNA damage signaling to mediate axis specification. The chain is Chromo domain-containing protein rhino from Drosophila melanogaster (Fruit fly).